The chain runs to 398 residues: Phosphoglycerate kinase (398 aa).

Residues 21 to 23, R36, 59 to 62, R119, and R157 contribute to the substrate site; these read DFN and HLGR. ATP contacts are provided by residues K208, G296, E327, and 354 to 357; that span reads GGDS.

The protein belongs to the phosphoglycerate kinase family. In terms of assembly, monomer.

Its subcellular location is the cytoplasm. The enzyme catalyses (2R)-3-phosphoglycerate + ATP = (2R)-3-phospho-glyceroyl phosphate + ADP. The protein operates within carbohydrate degradation; glycolysis; pyruvate from D-glyceraldehyde 3-phosphate: step 2/5. The sequence is that of Phosphoglycerate kinase from Lactococcus lactis subsp. cremoris (strain MG1363).